A 747-amino-acid chain; its full sequence is Sulfhydryl oxidase 1 (747 aa).

A signal peptide spans 1-29; the sequence is MRRCNSGSGPPPSLLLLLLWLLAVPGANA. A Thioredoxin domain is found at 36 to 156; it reads YSPSDPLTLL…RERLIDALES (121 aa). Catalysis depends on nucleophile residues Cys-70 and Cys-73. 2 cysteine pairs are disulfide-bonded: Cys-70/Cys-73 and Cys-101/Cys-110. A glycan (N-linked (GlcNAc...) (complex) asparagine) is linked at Asn-130. Residue Asn-243 is glycosylated (N-linked (GlcNAc...) asparagine). Cys-393 and Cys-405 are joined by a disulfide. The ERV/ALR sulfhydryl oxidase domain maps to 396 to 503; sequence SEPHFRGFPC…EDPQFPKVQW (108 aa). Arg-401, Trp-408, and His-412 together coordinate FAD. Ser-426 is modified (phosphoserine; by FAM20C). Cys-449 and Cys-452 form a disulfide bridge. Residues Asp-451, His-455, 478–485, Lys-500, and Trp-503 contribute to the FAD site; that span reads WSSHNRVN. Cys-509 and Cys-512 are disulfide-bonded. The interval 573–633 is disordered; the sequence is SRNSTLDPGK…HMAELQRNEQ (61 aa). Asn-575 carries N-linked (GlcNAc...) asparagine glycosylation. A compositionally biased stretch (basic and acidic residues) spans 621–633; sequence PPEHMAELQRNEQ. The chain crosses the membrane as a helical span at residues 710 to 730; the sequence is ISLCVGLYSLSFMGLLAMYTY.

This sequence belongs to the quiescin-sulfhydryl oxidase (QSOX) family. Monomer. The cofactor is FAD. In terms of processing, N-glycosylated. O-glycosylated on Thr and Ser residues. As to expression, expressed in heart, placenta, lung, liver, skeletal muscle, pancreas and very weakly in brain and kidney.

It is found in the golgi apparatus membrane. The protein localises to the secreted. It carries out the reaction 2 R'C(R)SH + O2 = R'C(R)S-S(R)CR' + H2O2. Catalyzes the oxidation of sulfhydryl groups in peptide and protein thiols to disulfides with the reduction of oxygen to hydrogen peroxide. Plays a role in disulfide bond formation in a variety of extracellular proteins. In fibroblasts, required for normal incorporation of laminin into the extracellular matrix, and thereby for normal cell-cell adhesion and cell migration. The polypeptide is Sulfhydryl oxidase 1 (QSOX1) (Homo sapiens (Human)).